A 373-amino-acid polypeptide reads, in one-letter code: Queuine tRNA-ribosyltransferase (373 aa).

The Proton acceptor role is filled by aspartate 91. Substrate is bound by residues 91–95 (DSGGF), aspartate 145, and glutamine 187. An RNA binding region spans residues 245 to 251 (GVGTPED). The Nucleophile role is filled by aspartate 264. Residues 269 to 273 (TRNAR) are RNA binding; important for wobble base 34 recognition. 4 residues coordinate Zn(2+): cysteine 302, cysteine 304, cysteine 307, and histidine 333.

The protein belongs to the queuine tRNA-ribosyltransferase family. In terms of assembly, homodimer. Within each dimer, one monomer is responsible for RNA recognition and catalysis, while the other monomer binds to the replacement base PreQ1. The cofactor is Zn(2+).

It carries out the reaction 7-aminomethyl-7-carbaguanine + guanosine(34) in tRNA = 7-aminomethyl-7-carbaguanosine(34) in tRNA + guanine. The protein operates within tRNA modification; tRNA-queuosine biosynthesis. Catalyzes the base-exchange of a guanine (G) residue with the queuine precursor 7-aminomethyl-7-deazaguanine (PreQ1) at position 34 (anticodon wobble position) in tRNAs with GU(N) anticodons (tRNA-Asp, -Asn, -His and -Tyr). Catalysis occurs through a double-displacement mechanism. The nucleophile active site attacks the C1' of nucleotide 34 to detach the guanine base from the RNA, forming a covalent enzyme-RNA intermediate. The proton acceptor active site deprotonates the incoming PreQ1, allowing a nucleophilic attack on the C1' of the ribose to form the product. After dissociation, two additional enzymatic reactions on the tRNA convert PreQ1 to queuine (Q), resulting in the hypermodified nucleoside queuosine (7-(((4,5-cis-dihydroxy-2-cyclopenten-1-yl)amino)methyl)-7-deazaguanosine). The sequence is that of Queuine tRNA-ribosyltransferase from Syntrophobacter fumaroxidans (strain DSM 10017 / MPOB).